The following is a 498-amino-acid chain: Delta(14)-sterol reductase erg24A (498 aa).

Helical transmembrane passes span 30-50, 91-111, 136-156, and 163-183; these read LGAF…TFLC, VTVW…FLPG, ILIL…FVVW, and YVQI…FVYA. Asn257 carries N-linked (GlcNAc...) asparagine glycosylation. The next 3 membrane-spanning stretches (helical) occupy residues 275–295, 302–322, and 339–359; these read IVLS…MEPA, VIMD…VPFI, and LREI…FRGA. NADP(+)-binding positions include Lys363, Arg367, Trp395, and 402–403; that span reads NY. N-linked (GlcNAc...) asparagine glycosylation is present at Asn429. The helical transmembrane segment at 444 to 464 threads the bilayer; sequence VRGWGMIFTYFFLVYFGALLI. Residues Asp470, 474–478, and Tyr485 each bind NADP(+); that span reads CKSKY.

The protein belongs to the ERG4/ERG24 family.

It localises to the endoplasmic reticulum membrane. It participates in steroid metabolism; ergosterol biosynthesis. Its function is as follows. Delta(14)-sterol reductase; part of the third module of ergosterol biosynthesis pathway that includes the late steps of the pathway. Catalyzes the reduction of the C14=C15 double bond within 4,4,24-trimethyl ergosta-8,14,24(28)-trienolto produce 4,4-dimethylfecosterol. The third module or late pathway involves the ergosterol synthesis itself through consecutive reactions that mainly occur in the endoplasmic reticulum (ER) membrane. Firstly, the squalene synthase erg9 catalyzes the condensation of 2 farnesyl pyrophosphate moieties to form squalene, which is the precursor of all steroids. Squalene synthase is crucial for balancing the incorporation of farnesyl diphosphate (FPP) into sterol and nonsterol isoprene synthesis. Secondly, squalene is converted into lanosterol by the consecutive action of the squalene epoxidase erg1 and the lanosterol synthase erg7. Then, the delta(24)-sterol C-methyltransferase erg6 methylates lanosterol at C-24 to produce eburicol. Eburicol is the substrate of the sterol 14-alpha demethylase encoded by cyp51A and cyp51B, to yield 4,4,24-trimethyl ergosta-8,14,24(28)-trienol. The C-14 reductase erg24 then reduces the C14=C15 double bond which leads to 4,4-dimethylfecosterol. A sequence of further demethylations at C-4, involving the C-4 demethylation complex containing the C-4 methylsterol oxidases erg25A or erg25B, the sterol-4-alpha-carboxylate 3-dehydrogenase erg26 and the 3-keto-steroid reductase erg27, leads to the production of fecosterol via 4-methylfecosterol. The C-8 sterol isomerase erg2 then catalyzes the reaction which results in unsaturation at C-7 in the B ring of sterols and thus converts fecosterol to episterol. The sterol-C5-desaturase erg3B then catalyzes the introduction of a C-5 double bond in the B ring to produce 5-dehydroepisterol. The 2 other sterol-C5-desaturases, erg3A and erg3C, seem to be less important in ergosterol biosynthesis. The C-22 sterol desaturase erg5 further converts 5-dehydroepisterol into ergosta-5,7,22,24(28)-tetraen-3beta-ol by forming the C-22(23) double bond in the sterol side chain. Finally, ergosta-5,7,22,24(28)-tetraen-3beta-ol is substrate of the C-24(28) sterol reductases erg4A and erg4B to produce ergosterol. Possible alternative sterol biosynthetic pathways might exist from fecosterol to ergosterol, depending on the activities of the erg3 isoforms. The polypeptide is Delta(14)-sterol reductase erg24A (Aspergillus fumigatus (strain ATCC MYA-4609 / CBS 101355 / FGSC A1100 / Af293) (Neosartorya fumigata)).